We begin with the raw amino-acid sequence, 161 residues long: E3 ubiquitin ligase complex SCF subunit sconC (161 aa).

The interval 102-161 is interaction with the F-box domain of F-box proteins; that stretch reads ILAANYLDIKGLLDVGCKTVANMIKGKSPEEIRKTFNIQNDFTPEEEDQIRRENEWAEDR.

It belongs to the SKP1 family. As to quaternary structure, component of the SCF (SKP1-CUL1-F-box protein) E3 ubiquitin ligase complexes.

It participates in protein modification; protein ubiquitination. Essential component of the SCF (SKP1-CUL1-F-box protein) E3 ubiquitin ligase complexes, which mediate the ubiquitination and subsequent proteasomal degradation of target proteins. Controls sulfur metabolite repression, probably by mediating the inactivation or degradation of the metR transcription factor. In Aspergillus flavus (strain ATCC 200026 / FGSC A1120 / IAM 13836 / NRRL 3357 / JCM 12722 / SRRC 167), this protein is E3 ubiquitin ligase complex SCF subunit sconC (sconC).